We begin with the raw amino-acid sequence, 445 residues long: Phosphoglucosamine mutase (445 aa).

Serine 102 serves as the catalytic Phosphoserine intermediate. Mg(2+) is bound by residues serine 102, aspartate 241, aspartate 243, and aspartate 245. A Phosphoserine modification is found at serine 102.

It belongs to the phosphohexose mutase family. It depends on Mg(2+) as a cofactor. Activated by phosphorylation.

The catalysed reaction is alpha-D-glucosamine 1-phosphate = D-glucosamine 6-phosphate. Its function is as follows. Catalyzes the conversion of glucosamine-6-phosphate to glucosamine-1-phosphate. The protein is Phosphoglucosamine mutase of Haemophilus influenzae (strain PittEE).